Consider the following 425-residue polypeptide: Light-independent protochlorophyllide reductase subunit N (425 aa).

Cys17, Cys42, and Cys103 together coordinate [4Fe-4S] cluster.

It belongs to the BchN/ChlN family. In terms of assembly, protochlorophyllide reductase is composed of three subunits; ChlL, ChlN and ChlB. Forms a heterotetramer of two ChlB and two ChlN subunits. [4Fe-4S] cluster is required as a cofactor.

The catalysed reaction is chlorophyllide a + oxidized 2[4Fe-4S]-[ferredoxin] + 2 ADP + 2 phosphate = protochlorophyllide a + reduced 2[4Fe-4S]-[ferredoxin] + 2 ATP + 2 H2O. It participates in porphyrin-containing compound metabolism; chlorophyll biosynthesis (light-independent). In terms of biological role, component of the dark-operative protochlorophyllide reductase (DPOR) that uses Mg-ATP and reduced ferredoxin to reduce ring D of protochlorophyllide (Pchlide) to form chlorophyllide a (Chlide). This reaction is light-independent. The NB-protein (ChlN-ChlB) is the catalytic component of the complex. The protein is Light-independent protochlorophyllide reductase subunit N of Synechococcus sp. (strain CC9605).